A 304-amino-acid polypeptide reads, in one-letter code: E3 ubiquitin-protein ligase CHIP (304 aa).

Over residues 1 to 10 the composition is skewed to basic and acidic residues; it reads MKGKEEKEGG. The disordered stretch occupies residues 1–30; it reads MKGKEEKEGGARLGTGGGGSPDKSPSAQEL. Lys2 participates in a covalent cross-link: Glycyl lysine isopeptide (Lys-Gly) (interchain with G-Cter in ubiquitin). Positions 11–20 are enriched in gly residues; the sequence is ARLGTGGGGS. Ser20 is subject to Phosphoserine. Lys23 is covalently cross-linked (Glycyl lysine isopeptide (Lys-Gly) (interchain with G-Cter in ubiquitin)). A phosphoserine mark is found at Ser24 and Ser26. 3 TPR repeats span residues 27-60, 61-94, and 96-128; these read AQEL…NPLV, AVYY…DGQS, and KAHF…AKEQ. The segment at 102 to 201 is required for interaction with MAPK7; sequence GQCQLEMESY…GHIRAQQACI (100 aa). The segment at 143 to 197 is required for interaction with and ubiquitination of MYOCD; it reads AKKKRWNSIEERRIHQESELHSYLTRLIAAERERELEECQRNHEGDEDDGHIRAQ. The required for interaction with FOXO1 stretch occupies residues 144–198; the sequence is KKKRWNSIEERRIHQESELHSYLTRLIAAERERELEECQRNHEGDEDDGHIRAQQ. Positions 144-304 are required for ubiquitination of FOXO1; that stretch reads KKKRWNSIEE…ISENGWVEDY (161 aa). Ser150 bears the Phosphoserine mark. Glycyl lysine isopeptide (Lys-Gly) (interchain with G-Cter in ubiquitin) cross-links involve residues Lys222 and Lys256. A U-box domain is found at 227–301; sequence DIPDYLCGKI…DAFISENGWV (75 aa). Ser274 carries the post-translational modification Phosphoserine.

In terms of assembly, homodimer. Interacts with BAG2, and with the E2 ubiquitin conjugating enzymes UBE2D1, UBE2D2 and UBE2D3. Detected in a ternary complex containing STUB1, HSPA1A and HSPBP1. Part of a complex composed of STUB1/CHIP, VCP/p97, CHRNA3, and UBXN2A that modulates the ubiquitination and endoplasmic reticulum-associated degradation (ERAD) of CHRNA3. Within the complex UBXN2A acts as a scaffold protein required for the interaction of CHRNA3 with VCP/p97, this interaction also inhibits CHRNA3 ubiquitination by STUB1/CHIP and subsequently ERAD. Interacts with MKKS. Interacts with DNAAF4. Interacts (via the U-box domain) with the UBE2V2-UBE2N heterodimer; the complex has a specific 'Lys-63'-linked polyubiquitination activity. Interacts (when monoubiquitinated) with ATXN3. Interacts with UBE2W. Interacts with DNAJB6. Interacts with FLCN and HSP90AA1. Interacts with HSP90. Interacts with UBE2N and UBE2V1. Interacts (via TPR repeats) with HSPA8 (via C-terminus). Interacts (via TPR repeats) with HSPA1A (via C-terminus). Interacts with the non-acetylated form of HSPA1A and HSPA1B. Interacts with SMAD3 and HSP90AB1. Interacts with UBE4B. Interacts with PRMT5. Interacts with MYOCD (via C-terminus). Interacts with FOXO1 (when phosphorylated on 'Ser-250'). Interacts with MAPK7/ERK5; the interaction is enhanced in the presence of IGF1 or MAP2K5 and promotes STUB1/CHIP E3 ligase activity. Interacts with and ubiquitinates ESR1; the interaction is promoted in the absence of estradiol (17-beta-estradiol/E2). Interacts with ESR2. Interacts with and ubiquitinates NFATC3; HSPA1A/HSP70 is required as a co-chaperone. In macrophages, interacts with PAQR3; the interaction promotes PPARG poylubiquitination and STUB1-mediated degradation. Component of the chaperone-assisted selective autophagy (CASA) complex consisting of BAG3, HSPA8/HSC70, HSPB8 and STUB1/CHIP. In terms of processing, auto-ubiquitinated; mediated by UBE2D1 and UBE2D2 and enhanced in the presence of MAP2K5. Monoubiquitinated at Lys-2 following cell stress by UBE2W, promoting the interaction with ATXN3. In terms of tissue distribution, expressed in the adventitia layer of the carotid artery (at protein level). Expressed in the CA1 region of the hippocampus (at protein level). Expressed in the uterus (at protein level).

It is found in the cytoplasm. Its subcellular location is the nucleus. The protein localises to the mitochondrion. It carries out the reaction S-ubiquitinyl-[E2 ubiquitin-conjugating enzyme]-L-cysteine + [acceptor protein]-L-lysine = [E2 ubiquitin-conjugating enzyme]-L-cysteine + N(6)-ubiquitinyl-[acceptor protein]-L-lysine.. The protein operates within protein modification; protein ubiquitination. Its function is as follows. E3 ubiquitin-protein ligase which targets misfolded chaperone substrates towards proteasomal degradation. Plays a role in the maintenance of mitochondrial morphology and promotes mitophagic removal of dysfunctional mitochondria; thereby acts as a protector against apoptosis in response to cellular stress. Negatively regulates vascular smooth muscle contraction, via degradation of the transcriptional activator MYOCD and subsequent loss of transcription of genes involved in vascular smooth muscle contraction. Promotes survival and proliferation of cardiac smooth muscle cells via ubiquitination and degradation of FOXO1, resulting in subsequent repression of FOXO1-mediated transcription of pro-apoptotic genes. Ubiquitinates ICER-type isoforms of CREM and targets them for proteasomal degradation, thereby acts as a positive effector of MAPK/ERK-mediated inhibition of apoptosis in cardiomyocytes. Inhibits lipopolysaccharide-induced apoptosis and hypertrophy in cardiomyocytes, via ubiquitination and subsequent proteasomal degradation of NFATC3. Collaborates with ATXN3 in the degradation of misfolded chaperone substrates: ATXN3 restricting the length of ubiquitin chain attached to STUB1/CHIP substrates and preventing further chain extension. Ubiquitinates NOS1 in concert with Hsp70 and Hsp40. Modulates the activity of several chaperone complexes, including Hsp70, Hsc70 and Hsp90. Ubiquitinates CHRNA3 targeting it for endoplasmic reticulum-associated degradation in cortical neurons, as part of the STUB1-VCP-UBXN2A complex. Ubiquitinates and promotes ESR1 proteasomal degradation in response to age-related circulating estradiol (17-beta-estradiol/E2) decline, thereby promotes neuronal apoptosis in response to ischemic reperfusion injury. Mediates transfer of non-canonical short ubiquitin chains to HSPA8 that have no effect on HSPA8 degradation. Mediates polyubiquitination of DNA polymerase beta (POLB) at 'Lys-41', 'Lys-61' and 'Lys-81', thereby playing a role in base-excision repair: catalyzes polyubiquitination by amplifying the HUWE1/ARF-BP1-dependent monoubiquitination and leading to POLB-degradation by the proteasome. Mediates polyubiquitination of CYP3A4. Ubiquitinates EPHA2 and may regulate the receptor stability and activity through proteasomal degradation. Acts as a co-chaperone for HSPA1A and HSPA1B chaperone proteins and promotes ubiquitin-mediated protein degradation. Negatively regulates the suppressive function of regulatory T-cells (Treg) during inflammation by mediating the ubiquitination and degradation of FOXP3 in a HSPA1A/B-dependent manner. Catalyzes monoubiquitination of SIRT6, preventing its degradation by the proteasome. Likely mediates polyubiquitination and down-regulates plasma membrane expression of PD-L1/CD274, an immune inhibitory ligand critical for immune tolerance to self and antitumor immunity. Negatively regulates TGF-beta signaling by modulating the basal level of SMAD3 via ubiquitin-mediated degradation. Plays a role in the degradation of TP53. Mediates ubiquitination of RIPK3 leading to its subsequent proteasome-dependent degradation. May regulate myosin assembly in striated muscles together with UBE4B and VCP/p97 by targeting myosin chaperone UNC45B for proteasomal degradation. Ubiquitinates PPARG in macrophages playing a role in M2 macrophages polarization and angiogenesis. This chain is E3 ubiquitin-protein ligase CHIP, found in Rattus norvegicus (Rat).